The primary structure comprises 488 residues: Ribulose bisphosphate carboxylase large chain (488 aa).

Substrate-binding residues include Asn127 and Thr177. The active-site Proton acceptor is Lys179. Lys181 provides a ligand contact to substrate. Mg(2+) is bound by residues Lys205, Asp207, and Glu208. Lys205 bears the N6-carboxylysine mark. His297 (proton acceptor) is an active-site residue. Substrate-binding residues include Arg298, His330, and Ser382.

The protein belongs to the RuBisCO large chain family. Type I subfamily. Heterohexadecamer of 8 large chains and 8 small chains. Requires Mg(2+) as cofactor.

Its subcellular location is the plastid. The protein resides in the chloroplast. The catalysed reaction is 2 (2R)-3-phosphoglycerate + 2 H(+) = D-ribulose 1,5-bisphosphate + CO2 + H2O. It catalyses the reaction D-ribulose 1,5-bisphosphate + O2 = 2-phosphoglycolate + (2R)-3-phosphoglycerate + 2 H(+). In terms of biological role, ruBisCO catalyzes two reactions: the carboxylation of D-ribulose 1,5-bisphosphate, the primary event in carbon dioxide fixation, as well as the oxidative fragmentation of the pentose substrate in the photorespiration process. Both reactions occur simultaneously and in competition at the same active site. The protein is Ribulose bisphosphate carboxylase large chain of Porphyridium aerugineum (Red microalga).